We begin with the raw amino-acid sequence, 204 residues long: N-(5'-phosphoribosyl)anthranilate isomerase (204 aa).

It belongs to the TrpF family.

The catalysed reaction is N-(5-phospho-beta-D-ribosyl)anthranilate = 1-(2-carboxyphenylamino)-1-deoxy-D-ribulose 5-phosphate. The protein operates within amino-acid biosynthesis; L-tryptophan biosynthesis; L-tryptophan from chorismate: step 3/5. This is N-(5'-phosphoribosyl)anthranilate isomerase from Bacillus cereus (strain G9842).